A 115-amino-acid polypeptide reads, in one-letter code: Regulator of ribonuclease activity B (115 aa).

The protein belongs to the RraB family. As to quaternary structure, interacts with the C-terminal region of Rne.

The protein resides in the cytoplasm. In terms of biological role, globally modulates RNA abundance by binding to RNase E (Rne) and regulating its endonucleolytic activity. Can modulate Rne action in a substrate-dependent manner by altering the composition of the degradosome. The protein is Regulator of ribonuclease activity B of Aeromonas hydrophila subsp. hydrophila (strain ATCC 7966 / DSM 30187 / BCRC 13018 / CCUG 14551 / JCM 1027 / KCTC 2358 / NCIMB 9240 / NCTC 8049).